The primary structure comprises 230 residues: Large ribosomal subunit protein uL1 (230 aa).

Belongs to the universal ribosomal protein uL1 family. As to quaternary structure, part of the 50S ribosomal subunit.

In terms of biological role, binds directly to 23S rRNA. The L1 stalk is quite mobile in the ribosome, and is involved in E site tRNA release. Functionally, protein L1 is also a translational repressor protein, it controls the translation of the L11 operon by binding to its mRNA. This Staphylococcus aureus (strain Mu3 / ATCC 700698) protein is Large ribosomal subunit protein uL1.